We begin with the raw amino-acid sequence, 673 residues long: MTALAYYQIHLIYTLPILGLLGLLTSPILTKFDIYKISILVFIAFSATTPWDSWIIRNGAWTYPSAESGQGVFGTFLDVPYEEYAFFVIQTVITGLVYVLATRHLLPSLALPKTRSSALSLALKALIPLPIIYLFTAHPSPSPDPLVTDHYFYMRALSLLITPPTMLLAALSGEYAFDWKSGRAKSTIAAIMIPTVYLIWVDYVAVGQDSWSINDEKIVGWRLGGVLPIEEAMFFLLTNLMIVLGLSACDHTQALYLLHGRTIYGNKKMPSSFPLITPPVLSLFFSSRPYSSQPKRDLELAVKLLEEKSRSFFVASAGFPSEVRERLVGLYAFCRVTDDLIDSPEVSSNPHATIDMVSDFLTLLFGPPLHPSQPDKILSSPLLPPSHPSRPTGMYPLPPPPSLSPAELVQFLTERVPVQYHFAFRLLAKLQGLIPRYPLDELLRGYTTDLIFPLSTEAVQARKTPIETTADLLDYGLCVAGSVAELLVYVSWASAPSQVPATIEEREAVLVASREMGTALQLVNIARDIKGDATEGRFYLPLSFFGLRDESKLAIPTDWTEPRPQDFDKLLSLSPSSTLPSSNASESFRFEWKTYSLPLVAYAEDLAKHSYKGIDRLPTEVQAGMRAACASYLLIGREIKVVWKGDVGERRTVAGWRRVRKVLSVVMSGWEGQ.

Positions 1 to 251 (MTALAYYQIH…IVLGLSACDH (251 aa)) are lycopene beta-cyclase. 7 consecutive transmembrane segments (helical) span residues 9-29 (IHLIYTLPILGLLGLLTSPIL), 36-56 (KISILVFIAFSATTPWDSWII), 81-101 (YEEYAFFVIQTVITGLVYVLA), 117-137 (SALSLALKALIPLPIIYLFTA), 157-177 (LSLLITPPTMLLAALSGEYAF), 187-207 (TIAAIMIPTVYLIWVDYVAVG), and 226-246 (VLPIEEAMFFLLTNLMIVLGL). Residues 258-673 (LHGRTIYGNK…SVVMSGWEGQ (416 aa)) form a phytoene synthase region. Residues 376 to 399 (KILSSPLLPPSHPSRPTGMYPLPP) are disordered.

The protein in the N-terminal section; belongs to the lycopene beta-cyclase family. In the C-terminal section; belongs to the phytoene/squalene synthase family.

It is found in the membrane. It carries out the reaction all-trans-lycopene = gamma-carotene. The catalysed reaction is gamma-carotene = all-trans-beta-carotene. The enzyme catalyses 2 (2E,6E,10E)-geranylgeranyl diphosphate = 15-cis-phytoene + 2 diphosphate. It functions in the pathway carotenoid biosynthesis; beta-carotene biosynthesis. Its pathway is carotenoid biosynthesis; phytoene biosynthesis; all-trans-phytoene from geranylgeranyl diphosphate: step 1/1. Bifunctional enzyme that catalyzes the reactions from geranylgeranyl diphosphate to phytoene (phytoene synthase) and lycopene to beta-carotene via the intermediate gamma-carotene (lycopene cyclase). The cyclase preferentially catalyzes the symmetric cyclization of both ends of the substrate to produce dicyclic carotenoids. Beta-carotene is further processed to the acidic carotenoid astaxanthin. This Phaffia rhodozyma (Yeast) protein is Bifunctional lycopene cyclase/phytoene synthase.